The chain runs to 377 residues: Porphobilinogen deaminase (377 aa).

Position 269 is an S-(dipyrrolylmethanemethyl)cysteine (cysteine 269).

This sequence belongs to the HMBS family. Monomer. Dipyrromethane is required as a cofactor.

It carries out the reaction 4 porphobilinogen + H2O = hydroxymethylbilane + 4 NH4(+). Its pathway is porphyrin-containing compound metabolism; protoporphyrin-IX biosynthesis; coproporphyrinogen-III from 5-aminolevulinate: step 2/4. Its function is as follows. Tetrapolymerization of the monopyrrole PBG into the hydroxymethylbilane pre-uroporphyrinogen in several discrete steps. In Micrococcus luteus (strain ATCC 4698 / DSM 20030 / JCM 1464 / CCM 169 / CCUG 5858 / IAM 1056 / NBRC 3333 / NCIMB 9278 / NCTC 2665 / VKM Ac-2230) (Micrococcus lysodeikticus), this protein is Porphobilinogen deaminase.